The primary structure comprises 246 residues: Small ribosomal subunit protein uS2 (246 aa).

This sequence belongs to the universal ribosomal protein uS2 family.

This is Small ribosomal subunit protein uS2 from Saccharophagus degradans (strain 2-40 / ATCC 43961 / DSM 17024).